The chain runs to 130 residues: Large ribosomal subunit protein bL19 (130 aa).

The protein belongs to the bacterial ribosomal protein bL19 family.

Functionally, this protein is located at the 30S-50S ribosomal subunit interface and may play a role in the structure and function of the aminoacyl-tRNA binding site. The sequence is that of Large ribosomal subunit protein bL19 from Cupriavidus metallidurans (strain ATCC 43123 / DSM 2839 / NBRC 102507 / CH34) (Ralstonia metallidurans).